The following is a 323-amino-acid chain: tRNA dimethylallyltransferase (323 aa).

An ATP-binding site is contributed by 12–19 (GPTAAGKT). Substrate is bound at residue 14–19 (TAAGKT). Interaction with substrate tRNA regions lie at residues 37–40 (DSAL) and 161–165 (QRLIR).

This sequence belongs to the IPP transferase family. Monomer. Mg(2+) serves as cofactor.

It catalyses the reaction adenosine(37) in tRNA + dimethylallyl diphosphate = N(6)-dimethylallyladenosine(37) in tRNA + diphosphate. Functionally, catalyzes the transfer of a dimethylallyl group onto the adenine at position 37 in tRNAs that read codons beginning with uridine, leading to the formation of N6-(dimethylallyl)adenosine (i(6)A). This chain is tRNA dimethylallyltransferase, found in Pseudomonas putida (strain GB-1).